The sequence spans 186 residues: ATP synthase subunit delta (186 aa).

The protein belongs to the ATPase delta chain family. F-type ATPases have 2 components, F(1) - the catalytic core - and F(0) - the membrane proton channel. F(1) has five subunits: alpha(3), beta(3), gamma(1), delta(1), epsilon(1). F(0) has three main subunits: a(1), b(2) and c(10-14). The alpha and beta chains form an alternating ring which encloses part of the gamma chain. F(1) is attached to F(0) by a central stalk formed by the gamma and epsilon chains, while a peripheral stalk is formed by the delta and b chains.

It localises to the cell inner membrane. Its function is as follows. F(1)F(0) ATP synthase produces ATP from ADP in the presence of a proton or sodium gradient. F-type ATPases consist of two structural domains, F(1) containing the extramembraneous catalytic core and F(0) containing the membrane proton channel, linked together by a central stalk and a peripheral stalk. During catalysis, ATP synthesis in the catalytic domain of F(1) is coupled via a rotary mechanism of the central stalk subunits to proton translocation. Functionally, this protein is part of the stalk that links CF(0) to CF(1). It either transmits conformational changes from CF(0) to CF(1) or is implicated in proton conduction. The polypeptide is ATP synthase subunit delta (Wolbachia sp. subsp. Drosophila simulans (strain wRi)).